The chain runs to 56 residues: Conotoxin Cal6.41b (56 aa).

A signal peptide spans 1-23; it reads MSGSGAMLLGLLILVAMATSLDT. 3 cysteine pairs are disulfide-bonded: Cys27/Cys41, Cys33/Cys50, and Cys40/Cys54.

In terms of tissue distribution, expressed by the venom duct.

It localises to the secreted. Probable neurotoxin. This Californiconus californicus (California cone) protein is Conotoxin Cal6.41b.